The primary structure comprises 88 residues: Apolipoprotein C-I (88 aa).

A signal peptide spans 1 to 26 (MRLFLSLPVLVVVLAMVLEGPAPAQA).

It belongs to the apolipoprotein C1 family.

Its subcellular location is the secreted. Its function is as follows. Inhibitor of lipoprotein binding to the low density lipoprotein (LDL) receptor, LDL receptor-related protein, and very low density lipoprotein (VLDL) receptor. Associates with high density lipoproteins (HDL) and the triacylglycerol-rich lipoproteins in the plasma and makes up about 10% of the protein of the VLDL and 2% of that of HDL. Appears to interfere directly with fatty acid uptake and is also the major plasma inhibitor of cholesteryl ester transfer protein (CETP). Binds free fatty acids and reduces their intracellular esterification. Modulates the interaction of APOE with beta-migrating VLDL and inhibits binding of beta-VLDL to the LDL receptor-related protein. The chain is Apolipoprotein C-I (APOC1) from Arctocephalus gazella (Antarctic fur seal).